A 298-amino-acid polypeptide reads, in one-letter code: Nucleotide-binding protein Csal_2229 (298 aa).

8–15 is a binding site for ATP; that stretch reads GRSGSGKS. Position 59–62 (59–62) interacts with GTP; sequence DARN.

It belongs to the RapZ-like family.

Its function is as follows. Displays ATPase and GTPase activities. In Chromohalobacter salexigens (strain ATCC BAA-138 / DSM 3043 / CIP 106854 / NCIMB 13768 / 1H11), this protein is Nucleotide-binding protein Csal_2229.